The primary structure comprises 708 residues: Leukotoxin translocation ATP-binding protein LktB (708 aa).

The region spanning 1 to 126 (MEANHQRNDL…ACYQGQLILV (126 aa)) is the Peptidase C39 domain. The ABC transmembrane type-1 domain occupies 155 to 437 (FLETLIVSIF…LAQLWQDFQQ (283 aa)). The next 5 helical transmembrane spans lie at 159 to 179 (LIVS…FQVV), 192 to 212 (LNII…LSGL), 270 to 290 (ALTS…MWYY), 296 to 316 (LVIL…SPIL), and 389 to 409 (VMVI…LSIG). One can recognise an ABC transporter domain in the interval 469-704 (ISFKNIRFRY…SNGLYSYLHQ (236 aa)). 503–510 (GRSGSGKS) contacts ATP.

The protein belongs to the ABC transporter superfamily. Protein-1 exporter (TC 3.A.1.109) family. As to quaternary structure, homodimer.

It is found in the cell inner membrane. It catalyses the reaction ATP + H2O + proteinSide 1 = ADP + phosphate + proteinSide 2.. In terms of biological role, part of the ABC transporter complex LktBD involved in leukotoxin export. Transmembrane domains (TMD) form a pore in the inner membrane and the ATP-binding domain (NBD) is responsible for energy generation. The polypeptide is Leukotoxin translocation ATP-binding protein LktB (lktB) (Mannheimia haemolytica (Pasteurella haemolytica)).